Reading from the N-terminus, the 625-residue chain is Procollagen galactosyltransferase 2 (625 aa).

A signal peptide spans 1 to 26 (MAARLATVACALFLLSSALLRLGCRA). Residues N96, N184, N381, and N579 are each glycosylated (N-linked (GlcNAc...) asparagine). The interval 597 to 625 (QGHIRSTAKNTEALPPPTSLDTVPSRDEL) is disordered. The Prevents secretion from ER motif lies at 622–625 (RDEL).

This sequence belongs to the glycosyltransferase 25 family.

The protein resides in the endoplasmic reticulum lumen. It catalyses the reaction (5R)-5-hydroxy-L-lysyl-[collagen] + UDP-alpha-D-galactose = (5R)-5-O-(beta-D-galactosyl)-5-hydroxy-L-lysyl-[collagen] + UDP + H(+). Beta-galactosyltransferase that transfers beta-galactose to hydroxylysine residues of collagen. This is Procollagen galactosyltransferase 2 (Colgalt2) from Mus musculus (Mouse).